The sequence spans 370 residues: Histidinol-phosphate aminotransferase 3 (370 aa).

Position 229 is an N6-(pyridoxal phosphate)lysine (lysine 229).

Belongs to the class-II pyridoxal-phosphate-dependent aminotransferase family. Histidinol-phosphate aminotransferase subfamily. Homodimer. Requires pyridoxal 5'-phosphate as cofactor.

The enzyme catalyses L-histidinol phosphate + 2-oxoglutarate = 3-(imidazol-4-yl)-2-oxopropyl phosphate + L-glutamate. Its pathway is amino-acid biosynthesis; L-histidine biosynthesis; L-histidine from 5-phospho-alpha-D-ribose 1-diphosphate: step 7/9. The chain is Histidinol-phosphate aminotransferase 3 (hisC3) from Rhizobium meliloti (strain 1021) (Ensifer meliloti).